Consider the following 288-residue polypeptide: Putative N-terminal acetyltransferase 2 (288 aa).

The disordered stretch occupies residues T68–P90.

As to quaternary structure, heterooligomeric.

It is found in the cytoplasm. Maybe involved in N-terminal acetylation of proteins. N-acetylation plays a role in normal eukaryotic translation and processing, protect against proteolytic degradation and protein turnover. The sequence is that of Putative N-terminal acetyltransferase 2 (NAT2) from Saccharomyces cerevisiae (strain ATCC 204508 / S288c) (Baker's yeast).